Reading from the N-terminus, the 230-residue chain is Phosphoribosylaminoimidazole-succinocarboxamide synthase (230 aa).

It belongs to the SAICAR synthetase family.

The enzyme catalyses 5-amino-1-(5-phospho-D-ribosyl)imidazole-4-carboxylate + L-aspartate + ATP = (2S)-2-[5-amino-1-(5-phospho-beta-D-ribosyl)imidazole-4-carboxamido]succinate + ADP + phosphate + 2 H(+). It participates in purine metabolism; IMP biosynthesis via de novo pathway; 5-amino-1-(5-phospho-D-ribosyl)imidazole-4-carboxamide from 5-amino-1-(5-phospho-D-ribosyl)imidazole-4-carboxylate: step 1/2. The chain is Phosphoribosylaminoimidazole-succinocarboxamide synthase (purC) from Thermotoga maritima (strain ATCC 43589 / DSM 3109 / JCM 10099 / NBRC 100826 / MSB8).